A 180-amino-acid polypeptide reads, in one-letter code: Adenine phosphoribosyltransferase (180 aa).

It belongs to the purine/pyrimidine phosphoribosyltransferase family. Homodimer.

Its subcellular location is the cytoplasm. It catalyses the reaction AMP + diphosphate = 5-phospho-alpha-D-ribose 1-diphosphate + adenine. It functions in the pathway purine metabolism; AMP biosynthesis via salvage pathway; AMP from adenine: step 1/1. In terms of biological role, catalyzes a salvage reaction resulting in the formation of AMP, that is energically less costly than de novo synthesis. The chain is Adenine phosphoribosyltransferase from Mycolicibacterium paratuberculosis (strain ATCC BAA-968 / K-10) (Mycobacterium paratuberculosis).